Reading from the N-terminus, the 690-residue chain is Eukaryotic translation initiation factor 3 subunit B (690 aa).

Positions 1 to 37 (MAKKKSEEQSSADANDSDYQEEPNFEDPPGFVDNISD) are disordered. Acidic residues predominate over residues 15-25 (NDSDYQEEPNF). The region spanning 57–141 (SVVVVDNIPK…HTFAVNLFTD (85 aa)) is the RRM domain. WD repeat units follow at residues 207 to 246 (TRERFTDTFVKWSPLGTYVVTFHKPGVAIWGGSSFQKIQK), 293 to 331 (DGMSVLSMFRWSHDDKFVARMGENSIHIYETPSFYLLDL), 334 to 369 (IKIPGIRGFSWSPTDNVIAYWVEEQNQIPARVTLME), 442 to 484 (EIRE…KPSL), and 530 to 575 (PDHF…IKRT). Residues 595–645 (EEKQKEIKKNLKKYYAAFEQKDRLRLTRASKELLEKRSQLRETFMEYRNKR) are a coiled coil.

Belongs to the eIF-3 subunit B family. As to quaternary structure, component of the eukaryotic translation initiation factor 3 (eIF-3) complex. The eIF-3 complex interacts with pix. Interacts with mxt.

It is found in the cytoplasm. RNA-binding component of the eukaryotic translation initiation factor 3 (eIF-3) complex, which is involved in protein synthesis of a specialized repertoire of mRNAs and, together with other initiation factors, stimulates binding of mRNA and methionyl-tRNAi to the 40S ribosome. The eIF-3 complex specifically targets and initiates translation of a subset of mRNAs involved in cell proliferation. This is Eukaryotic translation initiation factor 3 subunit B from Drosophila sechellia (Fruit fly).